The chain runs to 495 residues: MAVNVRDYIAENYGLFINGEFVKGSSDETIEVTNPATGETLSHITRAKDKDVDHAVKVAQEAFESWSLTSKSERAQMLRDIGDKLMAQKDKIAMIETLNNGKPIRETTAIDIPFAARHFHYFASVIETEEGTVNDIDKDTMSIVRHEPIGVVGAVVAWNFPMLLAAWKIAPAIAAGNTIVIQPSSSTPLSLLEVAKIFQEVLPKGVVNILTGKGSESGNAIFNHDGVDKLSFTGSTDVGYQVAEAAAKHLVPATLELGGKSANIILDDANLDLAVEGIQLGILFNQGEVCSAGSRLLVHEKIYDQLVPRLQEAFSNIKVGNPQDEATQMGSQTGKDQLDKIQSYIDAAKESDAQILAGGHRLTENGLDKGFFFEPTLIAVPDNHHKLAQEEIFGPVLTVIKVKDDQEAIDIANDSEYGLAGGVFSQNITRALNIAKAVRTGRIWINTYNQVPEGAPFGGYKKSGIGRETYKGALSNYQQVKNIYIDTSNALKGLY.

212-218 (GKGSESG) provides a ligand contact to NAD(+). Residues E256 and C290 contribute to the active site.

Belongs to the aldehyde dehydrogenase family.

It catalyses the reaction an aldehyde + NAD(+) + H2O = a carboxylate + NADH + 2 H(+). In Staphylococcus aureus (strain USA300), this protein is Putative aldehyde dehydrogenase AldA (aldA).